The chain runs to 175 residues: Calcineurin subunit B (175 aa).

4 consecutive EF-hand domains span residues alanine 21–proline 56, alanine 58–arginine 88, glutamate 90–threonine 125, and glutamine 131–isoleucine 166. Positions 34, 36, 38, 40, 45, 66, 68, 70, 72, 77, 103, 105, 107, 109, 114, 144, 146, 148, 150, and 155 each coordinate Ca(2+).

The protein belongs to the calcineurin regulatory subunit family. In terms of assembly, composed of a catalytic subunit (A) and a regulatory subunit (B).

Regulatory subunit of calcineurin, a calcium-dependent, calmodulin stimulated protein phosphatase. Confers calcium sensitivity. This Kluyveromyces lactis (strain ATCC 8585 / CBS 2359 / DSM 70799 / NBRC 1267 / NRRL Y-1140 / WM37) (Yeast) protein is Calcineurin subunit B (CNB1).